The sequence spans 234 residues: Triosephosphate isomerase (234 aa).

Substrate is bound at residue 8 to 10; it reads NFK. Histidine 90 functions as the Electrophile in the catalytic mechanism. Glutamate 159 (proton acceptor) is an active-site residue. Residues glycine 165 and serine 197 each contribute to the substrate site.

The protein belongs to the triosephosphate isomerase family. As to quaternary structure, homodimer.

The protein resides in the cytoplasm. The enzyme catalyses D-glyceraldehyde 3-phosphate = dihydroxyacetone phosphate. It functions in the pathway carbohydrate biosynthesis; gluconeogenesis. Its pathway is carbohydrate degradation; glycolysis; D-glyceraldehyde 3-phosphate from glycerone phosphate: step 1/1. Involved in the gluconeogenesis. Catalyzes stereospecifically the conversion of dihydroxyacetone phosphate (DHAP) to D-glyceraldehyde-3-phosphate (G3P). The sequence is that of Triosephosphate isomerase from Helicobacter pylori (strain Shi470).